Here is a 318-residue protein sequence, read N- to C-terminus: MTQLASAVWLPTLLLLLLLFWLPGCVPLHGPSTMSGSVGESLSVSCRYEEKFKTKDKYWCRVSLKILCKDIVKTSSSEEARSGRVTIRDHPDNLTFTVTYESLTLEDADTYMCAVDISLFDGSLGFDKYFKIELSVVPSEDPVSSPGPTLETPVVSTSLPTKGPALGSNTEGHREHDYSQGLRLPALLSVLALLLFLLVGTSLLAWRMFQKRLVKADRHPELSQNLRQASEQNECQYVNLQLHTWSLREEPVLPSQVEVVEYSTLALPQEELHYSSVAFNSQRQDSHANGDSLHQPQDQKAEYSEIQKPRKGLSDLYL.

The first 27 residues, 1 to 27, serve as a signal peptide directing secretion; sequence MTQLASAVWLPTLLLLLLLFWLPGCVP. An Ig-like V-type domain is found at 28–129; it reads LHGPSTMSGS…FDGSLGFDKY (102 aa). The Extracellular portion of the chain corresponds to 28 to 185; it reads LHGPSTMSGS…HDYSQGLRLP (158 aa). Cysteines 46 and 113 form a disulfide. Asparagine 93 carries an N-linked (GlcNAc...) asparagine glycan. Over residues 139–148 the composition is skewed to low complexity; that stretch reads SEDPVSSPGP. Positions 139–174 are disordered; it reads SEDPVSSPGPTLETPVVSTSLPTKGPALGSNTEGHR. Residues 186–206 form a helical membrane-spanning segment; sequence ALLSVLALLLFLLVGTSLLAW. At 207–318 the chain is on the cytoplasmic side; the sequence is RMFQKRLVKA…PRKGLSDLYL (112 aa). A compositionally biased stretch (polar residues) spans 284-296; sequence QDSHANGDSLHQP. The tract at residues 284–318 is disordered; that stretch reads QDSHANGDSLHQPQDQKAEYSEIQKPRKGLSDLYL. A compositionally biased stretch (basic and acidic residues) spans 297-308; it reads QDQKAEYSEIQK. At tyrosine 303 the chain carries Phosphotyrosine.

It belongs to the CD300 family. In terms of assembly, upon tyrosine-phosphorylation, interacts with PTN6/SHP-1 and PTPN11/SHP-2 and INPP5D. Phosphorylated on tyrosine. Post-translationally, N-glycosylated. As to expression, present on the surface of the majority of myeloid cells and a subset of B-cells. Present on the surface of NK cells after IL-12 stimulation.

The protein resides in the cell membrane. In terms of biological role, inhibitory receptor which may contribute to the down-regulation of cytolytic activity in natural killer (NK) cells, and to the down-regulation of mast cell degranulation. Negatively regulates the Toll-like receptor (TLR) signaling mediated by MYD88 but not TRIF through activation of PTPN6. The chain is CMRF35-like molecule 8 (Cd300a) from Mus musculus (Mouse).